Here is a 182-residue protein sequence, read N- to C-terminus: Ribosome maturation factor RimM (182 aa).

Positions Glu-102 to Phe-182 constitute a PRC barrel domain.

This sequence belongs to the RimM family. Binds ribosomal protein uS19.

The protein localises to the cytoplasm. An accessory protein needed during the final step in the assembly of 30S ribosomal subunit, possibly for assembly of the head region. Essential for efficient processing of 16S rRNA. May be needed both before and after RbfA during the maturation of 16S rRNA. It has affinity for free ribosomal 30S subunits but not for 70S ribosomes. This Salmonella enteritidis PT4 (strain P125109) protein is Ribosome maturation factor RimM.